The primary structure comprises 138 residues: Basic phospholipase A2 homolog ammodytin L (138 aa).

An N-terminal signal peptide occupies residues 1 to 16 (MRILWIVAVCLIGVEG). Cystine bridges form between Cys42–Cys131, Cys44–Cys60, Cys59–Cys111, Cys65–Cys138, Cys66–Cys104, Cys73–Cys97, and Cys91–Cys102. The interval 121 to 133 (KKYKVYLRFKCKG) is important for membrane-damaging activities in eukaryotes and bacteria; heparin-binding.

The protein belongs to the phospholipase A2 family. Group II subfamily. S49 sub-subfamily. Expressed by the venom gland.

The protein localises to the secreted. Functionally, snake venom phospholipase A2 homolog that lacks enzymatic activity. Is very active in inducing myonecrosis in vivo and shows a potent calcium-independent membrane-damaging activity in vitro, most probably by binding and incorporating in the membrane. Also acts as a presynaptic neurotoxin. A model of myotoxic mechanism has been proposed: an apo Lys49-PLA2 is activated by the entrance of a hydrophobic molecule (e.g. fatty acid) at the hydrophobic channel of the protein leading to a reorientation of a monomer. This reorientation causes a transition between 'inactive' to 'active' states, causing alignment of C-terminal and membrane-docking sites (MDoS) side-by-side and putting the membrane-disruption sites (MDiS) in the same plane, exposed to solvent and in a symmetric position for both monomers. The MDoS region stabilizes the toxin on membrane by the interaction of charged residues with phospholipid head groups. Subsequently, the MDiS region destabilizes the membrane with penetration of hydrophobic residues. This insertion causes a disorganization of the membrane, allowing an uncontrolled influx of ions (i.e. calcium and sodium), and eventually triggering irreversible intracellular alterations and cell death. This Vipera ammodytes ammodytes (Western sand viper) protein is Basic phospholipase A2 homolog ammodytin L.